The sequence spans 280 residues: Diaminopimelate epimerase (280 aa).

Substrate-binding residues include Asn-14 and Asn-67. The active-site Proton donor is Cys-76. Substrate is bound by residues 77–78 (GN), Asn-193, and 210–211 (ER). Cys-220 (proton acceptor) is an active-site residue. 221–222 (GT) serves as a coordination point for substrate.

It belongs to the diaminopimelate epimerase family. Homodimer.

It localises to the cytoplasm. The enzyme catalyses (2S,6S)-2,6-diaminopimelate = meso-2,6-diaminopimelate. It functions in the pathway amino-acid biosynthesis; L-lysine biosynthesis via DAP pathway; DL-2,6-diaminopimelate from LL-2,6-diaminopimelate: step 1/1. Catalyzes the stereoinversion of LL-2,6-diaminopimelate (L,L-DAP) to meso-diaminopimelate (meso-DAP), a precursor of L-lysine. The sequence is that of Diaminopimelate epimerase from Methanocella arvoryzae (strain DSM 22066 / NBRC 105507 / MRE50).